Here is a 2769-residue protein sequence, read N- to C-terminus: Teneurin-4 (2769 aa).

The segment covering 1 to 22 (MDVKERKPYRSLTRRRDAERRY) has biased composition (basic and acidic residues). The tract at residues 1-45 (MDVKERKPYRSLTRRRDAERRYTSSSADSEEGKAPQKSYSSSETL) is disordered. The region spanning 1–341 (MDVKERKPYR…KPSKYCNWKC (341 aa)) is the Teneurin N-terminal domain. Over 1–345 (MDVKERKPYR…YCNWKCAALS (345 aa)) the chain is Cytoplasmic. The residue at position 124 (serine 124) is a Phosphoserine. Residues 130 to 233 (RLWGRSTRSG…PPAGGAQEPA (104 aa)) are disordered. Over residues 134 to 155 (RSTRSGRSSCLSSRANSNLTLT) the composition is skewed to low complexity. Basic and acidic residues predominate over residues 156 to 166 (DTEHENTETDH). Position 178 is a phosphothreonine (threonine 178). Positions 187 to 211 (HTPNQHHAASINSLNRGNFTPRSNP) are enriched in polar residues. Residues 346–366 (AIVISATLVILLAYFVAMHLF) traverse the membrane as a helical segment. The Extracellular segment spans residues 367-2769 (GLNWHLQPME…FMRQSEMGRR (2403 aa)). A disordered region spans residues 400–426 (PSGGTGLETPDRKGKGTTEGKPSSFFP). Positions 408 to 417 (TPDRKGKGTT) are enriched in basic and acidic residues. N-linked (GlcNAc...) asparagine glycosylation is present at asparagine 467. The interval 507–526 (ARSLEGTPRQSRGTVPPSSH) is disordered. Polar residues predominate over residues 514-526 (PRQSRGTVPPSSH). 8 consecutive EGF-like domains span residues 562–593 (SVDN…PDCG), 594–624 (RASC…AECD), 626–658 (PTNQ…ESCE), 659–690 (EVDC…TNCE), 692–725 (PRAT…HDCS), 726–757 (IEIC…ACDQ), 758–787 (RACH…EHCT), and 788–831 (IAHY…AGCD). Cystine bridges form between cysteine 566/cysteine 576, cysteine 570/cysteine 581, cysteine 583/cysteine 592, cysteine 601/cysteine 612, cysteine 614/cysteine 623, cysteine 630/cysteine 641, cysteine 635/cysteine 646, cysteine 648/cysteine 657, cysteine 662/cysteine 673, cysteine 667/cysteine 678, cysteine 680/cysteine 689, cysteine 700/cysteine 713, cysteine 715/cysteine 724, cysteine 729/cysteine 739, cysteine 733/cysteine 744, cysteine 746/cysteine 755, cysteine 760/cysteine 770, cysteine 764/cysteine 775, cysteine 777/cysteine 786, cysteine 800/cysteine 810, cysteine 804/cysteine 819, and cysteine 821/cysteine 830. 2 N-linked (GlcNAc...) asparagine glycosylation sites follow: asparagine 940 and asparagine 1259. 5 NHL repeats span residues 1216–1259 (SCPS…PSGN), 1264–1308 (LELR…IKST), 1334–1378 (TRCG…NGII), 1393–1444 (LSCD…VAGR), and 1523–1566 (CFSG…IRKN). A YD 1 repeat occupies 1576-1595 (YELSSPIDQELYLFDTTGKH). N-linked (GlcNAc...) asparagine glycosylation occurs at asparagine 1609. 3 YD repeats span residues 1612–1632 (YTGD…VNVR), 1675–1694 (YHGN…WTTF), and 1695–1717 (YEYD…SSFR). 4 N-linked (GlcNAc...) asparagine glycosylation sites follow: asparagine 1705, asparagine 1741, asparagine 1799, and asparagine 1884. YD repeat units follow at residues 1887–1906 (YSPG…ERME), 1928–1946 (YLEK…YIFE), 1947–1967 (FDKN…QTLE), 1974–1991 (YYRN…VIQD), 1992–2013 (FTED…VIYK), 2014–2031 (YGKL…TKVS), 2034–2054 (YDET…FTCT), 2057–2077 (YRQI…EGMV), 2085–2104 (YDNS…TPLP), 2110–2127 (YDDV…GVIY), 2128–2154 (YDIN…MKEV), 2156–2169 (YEIF…MTVQ), 2170–2193 (YDNM…TRYS), 2196–2216 (YDAD…WRYS), 2217–2237 (YDLN…LTPL), 2239–2259 (YDIR…DEDG), 2271–2291 (YNSA…SVRY), and 2293–2313 (YDGL…LQFF). The N-linked (GlcNAc...) asparagine glycan is linked to asparagine 1985. An N-linked (GlcNAc...) asparagine glycan is attached at asparagine 2188. The N-linked (GlcNAc...) asparagine glycan is linked to asparagine 2328. Residues 2339 to 2380 (YDLQGHLFAMELSSGDEFYIACDNIGTPLAVFSGTGLMIKQI) form a YD 23 repeat. N-linked (GlcNAc...) asparagine glycosylation is present at asparagine 2646.

It belongs to the tenascin family. Teneurin subfamily. In terms of assembly, homodimer; disulfide-linked. May also form heterodimer with either TENM1 or TENM2 or TENM3.

It is found in the cell membrane. The protein resides in the cell projection. It localises to the nucleus. Its subcellular location is the cytoplasm. Involved in neural development, regulating the establishment of proper connectivity within the nervous system. Plays a role in the establishment of the anterior-posterior axis during gastrulation. Regulates the differentiation and cellular process formation of oligodendrocytes and myelination of small-diameter axons in the central nervous system (CNS). Promotes activation of focal adhesion kinase. May function as a cellular signal transducer. This is Teneurin-4 (TENM4) from Homo sapiens (Human).